The primary structure comprises 571 residues: Hemagglutinin-neuraminidase (571 aa).

At 1 to 25 (MEDYSNLSLKSIPKRTCRIIFRTAT) the chain is on the intravirion side. Residues 26-46 (ILGICTLIVLCSSILHEIIHL) form a helical membrane-spanning segment. Topologically, residues 47 to 571 (DVSSGLMDSD…IIPFLRELIP (525 aa)) are virion surface. Disulfide bonds link Cys-166/Cys-190, Cys-180/Cys-241, and Cys-232/Cys-245. The segment at 228-233 (NRKSCS) is important for neuraminidase activity. The involved in neuraminidase activity stretch occupies residues 228–233 (NRKSCS). N-linked (GlcNAc...) asparagine; by host glycosylation is found at Asn-272, Asn-284, Asn-335, and Asn-341. 3 disulfides stabilise this stretch: Cys-338–Cys-459, Cys-370–Cys-380, and Cys-453–Cys-463. A glycan (N-linked (GlcNAc...) asparagine; by host) is linked at Asn-386. The tract at residues 393–398 (GAEGRL) is sialic receptor-binding site. N-linked (GlcNAc...) asparagine; by host glycosylation is found at Asn-454, Asn-498, Asn-501, Asn-517, and Asn-522. A disulfide bridge connects residues Cys-535 and Cys-546.

Belongs to the paramyxoviruses hemagglutinin-neuraminidase family. In terms of assembly, homotetramer; composed of disulfide-linked homodimers. Interacts with F protein trimer.

The protein resides in the virion membrane. Its subcellular location is the host cell membrane. It carries out the reaction Hydrolysis of alpha-(2-&gt;3)-, alpha-(2-&gt;6)-, alpha-(2-&gt;8)- glycosidic linkages of terminal sialic acid residues in oligosaccharides, glycoproteins, glycolipids, colominic acid and synthetic substrates.. Attaches the virus to sialic acid-containing cell receptors and thereby initiating infection. Binding of HN protein to the receptor induces a conformational change that allows the F protein to trigger virion/cell membranes fusion. Its function is as follows. Neuraminidase activity ensures the efficient spread of the virus by dissociating the mature virions from the neuraminic acid containing glycoproteins. This is Hemagglutinin-neuraminidase (HN) from Human parainfluenza 2 virus (strain Toshiba) (HPIV-2).